The chain runs to 283 residues: Bifunctional protein FolD (283 aa).

An NADP(+)-binding site is contributed by G166–S168.

The protein belongs to the tetrahydrofolate dehydrogenase/cyclohydrolase family. Homodimer.

The catalysed reaction is (6R)-5,10-methylene-5,6,7,8-tetrahydrofolate + NADP(+) = (6R)-5,10-methenyltetrahydrofolate + NADPH. It catalyses the reaction (6R)-5,10-methenyltetrahydrofolate + H2O = (6R)-10-formyltetrahydrofolate + H(+). It functions in the pathway one-carbon metabolism; tetrahydrofolate interconversion. In terms of biological role, catalyzes the oxidation of 5,10-methylenetetrahydrofolate to 5,10-methenyltetrahydrofolate and then the hydrolysis of 5,10-methenyltetrahydrofolate to 10-formyltetrahydrofolate. This Coxiella burnetii (strain CbuK_Q154) (Coxiella burnetii (strain Q154)) protein is Bifunctional protein FolD.